A 476-amino-acid polypeptide reads, in one-letter code: MSYEERANAHPNLNDESDVEEEALVNDYREQVNFDDGMSELDRTTSLGAASQTQDLQAQLAAAATPLEYQATLETKFASYDNYCSLFHYILNSDGPVELEVPSYYWAWDVIDEFIYQFESFCRYRNRVARSGSNEEEAQLLRENPNTWGCYSVLNVLYSLIQRSQINEQLAAMKRGEDPLAFAGEYGSRPLYKMLGYFSIIGLLRVHCLLGDFSLALKTLDDIEMNKKAMFARVMAAHFTTYYYVGFSYMMMRRYGDAIRMFSHILVYVSRTKNFQKGGNSYDAIAKKNDQMYALIAICVALHPTRLDDTIHSALREKYGEQLNRLQHGGPEALPLFEELFRSACPKFISPTPPDFDNPSVNIDPVDHHTAIFMDEVKNTLYNPTIRSYLKLYTTMDLKKLAGFLEVEPEKLRSWLLVNKQRSRQVRWVEGGLLEGEPVNANDLDYALEKDLIHVSETKAGRRLVDWYLRNLARVY.

The 196-residue stretch at 257–452 folds into the PCI domain; that stretch reads DAIRMFSHIL…DLDYALEKDL (196 aa).

This sequence belongs to the eIF-3 subunit L family. Component of the eukaryotic translation initiation factor 3 (eIF-3) complex.

It localises to the cytoplasm. Its function is as follows. Component of the eukaryotic translation initiation factor 3 (eIF-3) complex, which is involved in protein synthesis of a specialized repertoire of mRNAs and, together with other initiation factors, stimulates binding of mRNA and methionyl-tRNAi to the 40S ribosome. The eIF-3 complex specifically targets and initiates translation of a subset of mRNAs involved in cell proliferation. In Aspergillus terreus (strain NIH 2624 / FGSC A1156), this protein is Eukaryotic translation initiation factor 3 subunit L.